We begin with the raw amino-acid sequence, 138 residues long: Basic phospholipase A2 homolog G6K49 (138 aa).

An N-terminal signal peptide occupies residues 1–16; sequence MRTLWIMAVLLLGVEG. Cystine bridges form between Cys42–Cys132, Cys44–Cys60, Cys59–Cys112, Cys65–Cys138, Cys66–Cys105, Cys73–Cys98, and Cys91–Cys103. The segment at 122–133 is important for membrane-damaging activities in eukaryotes and bacteria; heparin-binding; sequence KKHRVTVKFLCK.

The protein belongs to the phospholipase A2 family. Group II subfamily. K49 sub-subfamily. In terms of assembly, homodimer; non-covalently linked. Expressed by the venom gland.

Its subcellular location is the secreted. Its function is as follows. Snake venom phospholipase A2 (PLA2) that lacks enzymatic activity. Displays myotoxic activities. A model of myotoxic mechanism has been proposed: an apo Lys49-PLA2 is activated by the entrance of a hydrophobic molecule (e.g. fatty acid) at the hydrophobic channel of the protein leading to a reorientation of a monomer. This reorientation causes a transition between 'inactive' to 'active' states, causing alignment of C-terminal and membrane-docking sites (MDoS) side-by-side and putting the membrane-disruption sites (MDiS) in the same plane, exposed to solvent and in a symmetric position for both monomers. The MDoS region stabilizes the toxin on membrane by the interaction of charged residues with phospholipid head groups. Subsequently, the MDiS region destabilizes the membrane with penetration of hydrophobic residues. This insertion causes a disorganization of the membrane, allowing an uncontrolled influx of ions (i.e. calcium and sodium), and eventually triggering irreversible intracellular alterations and cell death. This chain is Basic phospholipase A2 homolog G6K49, found in Calloselasma rhodostoma (Malayan pit viper).